The chain runs to 162 residues: Proepiregulin (162 aa).

Residues 1 to 22 (METFPAAWVLALLCLGSHLLQA) form the signal peptide. The propeptide occupies 23-55 (VISTTVIPSCIPEESEDNCTALVQMEDDPRVAQ). Asparagine 40 carries N-linked (GlcNAc...) asparagine glycosylation. The EGF-like domain occupies 57-97 (LITKCSSDMDGYCLHGHCIYLVDMSEKYCRCEVGYTGLRCE). 3 cysteine pairs are disulfide-bonded: cysteine 61–cysteine 74, cysteine 69–cysteine 85, and cysteine 87–cysteine 96. The propeptide at 102-162 (TVHQPLSREY…TSGGPGLPQV (61 aa)) is removed in mature form. A helical membrane pass occupies residues 113–133 (ALTVILVFLFLIVTAGSMYYF).

Interacts with EGFR and ERBB4.

Its subcellular location is the secreted. It is found in the extracellular space. The protein localises to the cell membrane. In terms of biological role, ligand of the EGF receptor/EGFR and ERBB4. Stimulates EGFR and ERBB4 tyrosine phosphorylation. Contributes to inflammation, wound healing, tissue repair, and oocyte maturation by regulating angiogenesis and vascular remodeling and by stimulating cell proliferation. This is Proepiregulin (Ereg) from Rattus norvegicus (Rat).